The primary structure comprises 214 residues: Large ribosomal subunit protein uL4c (214 aa).

Residues 43–80 are disordered; that stretch reads KQSNEKRQGSANTKTRSEVRGGGRKPWRQKGTGRARAG. Residues 64–75 show a composition bias toward basic residues; the sequence is GGRKPWRQKGTG.

This sequence belongs to the universal ribosomal protein uL4 family. Part of the 50S ribosomal subunit.

It localises to the plastid. The protein resides in the chloroplast. Probably binds the 23S rRNA. The polypeptide is Large ribosomal subunit protein uL4c (rpl4) (Porphyra purpurea (Red seaweed)).